The primary structure comprises 335 residues: Aspartate--ammonia ligase (335 aa).

It belongs to the class-II aminoacyl-tRNA synthetase family. AsnA subfamily.

The protein resides in the cytoplasm. The enzyme catalyses L-aspartate + NH4(+) + ATP = L-asparagine + AMP + diphosphate + H(+). It functions in the pathway amino-acid biosynthesis; L-asparagine biosynthesis; L-asparagine from L-aspartate (ammonia route): step 1/1. This Pediococcus pentosaceus (strain ATCC 25745 / CCUG 21536 / LMG 10740 / 183-1w) protein is Aspartate--ammonia ligase.